A 479-amino-acid polypeptide reads, in one-letter code: Probable polyamine transporter At3g19553 (479 aa).

12 consecutive transmembrane segments (helical) span residues 22 to 42, 53 to 73, 86 to 106, 130 to 150, 160 to 180, 236 to 256, 275 to 295, 304 to 324, 332 to 352, 355 to 375, 395 to 415, and 420 to 440; these read LTLL…PFGV, LLAL…EALV, GYVV…EGFW, FPVL…TFSL, IVGF…VVMA, ALFG…MAGT, VGML…AAMS, MSSD…PAFF, TPTI…WMSF, IIEF…AAFV, FGVS…MVLA, and FLIS…LTLV. Residues 454–479 are disordered; that stretch reads RPVSGVSSESQLDEEHGDESAASLLP.

It belongs to the amino acid-polyamine-organocation (APC) superfamily. Polyamine:cation symporter (PHS) (TC 2.A.3.12) family.

It is found in the cell membrane. In terms of biological role, probable cell membrane polyamine/proton symporter involved in the polyamine uptake in cells. The polypeptide is Probable polyamine transporter At3g19553 (Arabidopsis thaliana (Mouse-ear cress)).